Consider the following 115-residue polypeptide: uncharacterized protein (115 aa).

The signal sequence occupies residues 1-24; it reads MLPLCLTFLSFFLSLGGSFKAVMT. 2 consecutive transmembrane segments (helical) span residues 39-59 and 93-113; these read FWIFNWTVTLIPLNSLVALAI and YLTSLGSNFGGIFVYPLFLLS.

It localises to the membrane. This is an uncharacterized protein from Saccharomyces cerevisiae (strain ATCC 204508 / S288c) (Baker's yeast).